Reading from the N-terminus, the 409-residue chain is Elongation factor Tu, chloroplastic (409 aa).

In terms of domain architecture, tr-type G spans 10-214 (KPHVNIGTIG…AVDAYIPTPE (205 aa)). Residues 19–26 (GHVDHGKT) are G1. 19–26 (GHVDHGKT) serves as a coordination point for GTP. T26 is a Mg(2+) binding site. Positions 60 to 64 (GITIN) are G2. The tract at residues 81–84 (DCPG) is G3. GTP is bound by residues 81–85 (DCPGH) and 136–139 (NKQD). Residues 136–139 (NKQD) are G4. Residues 174–176 (SAL) form a G5 region.

It belongs to the TRAFAC class translation factor GTPase superfamily. Classic translation factor GTPase family. EF-Tu/EF-1A subfamily.

Its subcellular location is the plastid. The protein resides in the chloroplast. The catalysed reaction is GTP + H2O = GDP + phosphate + H(+). Functionally, GTP hydrolase that promotes the GTP-dependent binding of aminoacyl-tRNA to the A-site of ribosomes during protein biosynthesis. This Thalassiosira pseudonana (Marine diatom) protein is Elongation factor Tu, chloroplastic (tufA).